Reading from the N-terminus, the 229-residue chain is Ribonuclease 3 (229 aa).

Residues 5-127 (LDRLERKLGY…LIGAIYLDTG (123 aa)) form the RNase III domain. Glutamate 40 serves as a coordination point for Mg(2+). Residue aspartate 44 is part of the active site. Residues aspartate 113 and glutamate 116 each contribute to the Mg(2+) site. Residue glutamate 116 is part of the active site. The 71-residue stretch at 154 to 224 (DPKTRLQEFL…AAAALVALGV (71 aa)) folds into the DRBM domain.

This sequence belongs to the ribonuclease III family. In terms of assembly, homodimer. The cofactor is Mg(2+).

The protein resides in the cytoplasm. It catalyses the reaction Endonucleolytic cleavage to 5'-phosphomonoester.. Digests double-stranded RNA. Involved in the processing of primary rRNA transcript to yield the immediate precursors to the large and small rRNAs (23S and 16S). Processes some mRNAs, and tRNAs when they are encoded in the rRNA operon. Processes pre-crRNA and tracrRNA of type II CRISPR loci if present in the organism. This Pseudomonas paraeruginosa (strain DSM 24068 / PA7) (Pseudomonas aeruginosa (strain PA7)) protein is Ribonuclease 3.